Reading from the N-terminus, the 465-residue chain is Argininosuccinate lyase (465 aa).

The protein belongs to the lyase 1 family. Argininosuccinate lyase subfamily.

It is found in the cytoplasm. The catalysed reaction is 2-(N(omega)-L-arginino)succinate = fumarate + L-arginine. It participates in amino-acid biosynthesis; L-arginine biosynthesis; L-arginine from L-ornithine and carbamoyl phosphate: step 3/3. The polypeptide is Argininosuccinate lyase (Aromatoleum aromaticum (strain DSM 19018 / LMG 30748 / EbN1) (Azoarcus sp. (strain EbN1))).